We begin with the raw amino-acid sequence, 483 residues long: 6-phosphogluconate dehydrogenase, decarboxylating (483 aa).

Residues 10–15 (GLAVMG) and 33–35 (NRT) each bind NADP(+). Position 38 is an N6-acetyllysine (Lys-38). Ser-57 carries the phosphoserine modification. NADP(+)-binding positions include 75-77 (VKA) and Asn-103. Residues Asn-103, Ser-129, and Gly-131 each contribute to the substrate site. The residue at position 129 (Ser-129) is a Phosphoserine. Lys-184 functions as the Proton acceptor in the catalytic mechanism. A substrate-binding site is contributed by 187–188 (HN). The active-site Proton donor is Glu-191. Substrate-binding residues include Tyr-192, Lys-261, Arg-288, Arg-447, and His-453. Residue 478–481 (SSSY) participates in NADP(+) binding.

This sequence belongs to the 6-phosphogluconate dehydrogenase family. In terms of assembly, homodimer.

The protein resides in the cytoplasm. The enzyme catalyses 6-phospho-D-gluconate + NADP(+) = D-ribulose 5-phosphate + CO2 + NADPH. It participates in carbohydrate degradation; pentose phosphate pathway; D-ribulose 5-phosphate from D-glucose 6-phosphate (oxidative stage): step 3/3. Functionally, catalyzes the oxidative decarboxylation of 6-phosphogluconate to ribulose 5-phosphate and CO(2), with concomitant reduction of NADP to NADPH. In Ovis aries (Sheep), this protein is 6-phosphogluconate dehydrogenase, decarboxylating (PGD).